We begin with the raw amino-acid sequence, 201 residues long: Dephospho-CoA kinase (201 aa).

One can recognise a DPCK domain in the interval 4–201; the sequence is TIGLTGGIAS…ILKQWDALEK (198 aa). Residue 12-17 participates in ATP binding; the sequence is ASGKST.

Belongs to the CoaE family.

It is found in the cytoplasm. The catalysed reaction is 3'-dephospho-CoA + ATP = ADP + CoA + H(+). Its pathway is cofactor biosynthesis; coenzyme A biosynthesis; CoA from (R)-pantothenate: step 5/5. Catalyzes the phosphorylation of the 3'-hydroxyl group of dephosphocoenzyme A to form coenzyme A. The polypeptide is Dephospho-CoA kinase (Geobacillus kaustophilus (strain HTA426)).